The following is a 78-amino-acid chain: Large ribosomal subunit protein bL28 (78 aa).

This sequence belongs to the bacterial ribosomal protein bL28 family.

This chain is Large ribosomal subunit protein bL28, found in Trichormus variabilis (strain ATCC 29413 / PCC 7937) (Anabaena variabilis).